We begin with the raw amino-acid sequence, 347 residues long: Phosphoribosylformylglycinamidine cyclo-ligase (347 aa).

It belongs to the AIR synthase family.

The protein resides in the cytoplasm. The enzyme catalyses 2-formamido-N(1)-(5-O-phospho-beta-D-ribosyl)acetamidine + ATP = 5-amino-1-(5-phospho-beta-D-ribosyl)imidazole + ADP + phosphate + H(+). The protein operates within purine metabolism; IMP biosynthesis via de novo pathway; 5-amino-1-(5-phospho-D-ribosyl)imidazole from N(2)-formyl-N(1)-(5-phospho-D-ribosyl)glycinamide: step 2/2. The chain is Phosphoribosylformylglycinamidine cyclo-ligase from Hydrogenovibrio crunogenus (strain DSM 25203 / XCL-2) (Thiomicrospira crunogena).